We begin with the raw amino-acid sequence, 256 residues long: Putative F-box protein At3g51171 (256 aa).

The 44-residue stretch at 1–44 (MVPLPWELEEDILSRLAAQSLVRFRSVCKRWNYLFDEKSFIKNH) folds into the F-box domain.

The protein is Putative F-box protein At3g51171 of Arabidopsis thaliana (Mouse-ear cress).